Here is a 204-residue protein sequence, read N- to C-terminus: Peroxynitrite isomerase (204 aa).

The GXWXGXG signature appears at Gly-21–Gly-27. Residue His-195 participates in heme b binding.

It belongs to the nitrobindin family. Homodimer. The cofactor is heme b.

The catalysed reaction is peroxynitrite = nitrate. It functions in the pathway nitrogen metabolism. In terms of biological role, heme-binding protein able to scavenge peroxynitrite and to protect free L-tyrosine against peroxynitrite-mediated nitration, by acting as a peroxynitrite isomerase that converts peroxynitrite to nitrate. Therefore, this protein likely plays a role in peroxynitrite sensing and in the detoxification of reactive nitrogen and oxygen species (RNS and ROS, respectively). Is able to bind nitric oxide (NO) in vitro, but may act as a sensor of peroxynitrite levels in vivo. The protein is Peroxynitrite isomerase of Arthrobacter sp. (strain FB24).